The sequence spans 191 residues: FMN reductase (NADH) RutF (191 aa).

The protein belongs to the non-flavoprotein flavin reductase family. RutF subfamily.

The enzyme catalyses FMNH2 + NAD(+) = FMN + NADH + 2 H(+). In terms of biological role, catalyzes the reduction of FMN to FMNH2 which is used to reduce pyrimidine by RutA via the Rut pathway. The chain is FMN reductase (NADH) RutF from Escherichia coli O1:K1 / APEC.